Reading from the N-terminus, the 297-residue chain is Acetylglutamate kinase (297 aa).

Residues 72–73 (GG), R94, and N193 contribute to the substrate site.

This sequence belongs to the acetylglutamate kinase family. ArgB subfamily.

It is found in the cytoplasm. It carries out the reaction N-acetyl-L-glutamate + ATP = N-acetyl-L-glutamyl 5-phosphate + ADP. Its pathway is amino-acid biosynthesis; L-arginine biosynthesis; N(2)-acetyl-L-ornithine from L-glutamate: step 2/4. In terms of biological role, catalyzes the ATP-dependent phosphorylation of N-acetyl-L-glutamate. This Mycobacterium leprae (strain TN) protein is Acetylglutamate kinase.